A 759-amino-acid chain; its full sequence is GTPase-activating protein rrc-1 (759 aa).

The region spanning 164 to 243 (PAIAAAVVTK…PRDCVMLIDD (80 aa)) is the SH3 domain. A Rho-GAP domain is found at 280–473 (LELTDLYMRT…FFIENSESLF (194 aa)). Residues 591 to 624 (ARSMRPTSRPPPSPRTRRARFSNGSSNNVQKLNE) form a disordered region. Residues 612 to 622 (SNGSSNNVQKL) show a composition bias toward polar residues.

Expressed in coelomocytes, excretory cells, uterine-seam cells and GLR cells.

Its function is as follows. Functions as a GTPase-activating protein (GAP) for ced-10/rac-1 and CDC42. This is GTPase-activating protein rrc-1 (rrc-1) from Caenorhabditis elegans.